Reading from the N-terminus, the 228-residue chain is Expansin-B13 (228 aa).

The signal sequence occupies residues Met-1–Cys-22. Residue Asn-32 is glycosylated (N-linked (GlcNAc...) asparagine). In terms of domain architecture, Expansin-like EG45 spans Ser-61 to Ala-172. 2 cysteine pairs are disulfide-bonded: Cys-64–Cys-92 and Cys-100–Cys-106. One can recognise an Expansin-like CBD domain in the interval Gly-142 to Ser-223.

This sequence belongs to the expansin family. Expansin B subfamily.

The protein localises to the secreted. It is found in the cell wall. It localises to the membrane. In terms of biological role, may cause loosening and extension of plant cell walls by disrupting non-covalent bonding between cellulose microfibrils and matrix glucans. No enzymatic activity has been found. May be required for rapid internodal elongation in deepwater rice during submergence. The protein is Expansin-B13 (EXPB13) of Oryza sativa subsp. japonica (Rice).